A 222-amino-acid polypeptide reads, in one-letter code: 2-C-methyl-D-erythritol 2,4-cyclodiphosphate synthase, chloroplastic (222 aa).

A chloroplast-targeting transit peptide spans 1 to 43 (MATASSLFLASPVATAPTARARSTPSASPARPSLRLRRPSTLA). Positions 73 and 75 each coordinate a divalent metal cation. Residues 73-75 (DLH), 99-100 (HS), 103-111 (DVLLHCVVD), 121-123 (DIG), 126-130 (FPDSD), Asp-130, 165-171 (LQKPKIS), and 196-200 (AKTHE) contribute to the substrate site. His-107 lines the a divalent metal cation pocket.

The protein belongs to the IspF family. As to quaternary structure, homotrimer. Requires a divalent metal cation as cofactor. Expressed in roots, leaves, stems, leaf sheaths and young panicles.

The protein resides in the plastid. Its subcellular location is the chloroplast. The enzyme catalyses 4-CDP-2-C-methyl-D-erythritol 2-phosphate = 2-C-methyl-D-erythritol 2,4-cyclic diphosphate + CMP. It participates in isoprenoid biosynthesis; isopentenyl diphosphate biosynthesis via DXP pathway; isopentenyl diphosphate from 1-deoxy-D-xylulose 5-phosphate: step 4/6. Enzyme of the plastid non-mevalonate pathway for isoprenoid biosynthesis that converts 4-diphosphocytidyl-2C-methyl-D-erythritol 2-phosphate into 2C-methyl-D-erythritol 2,4-cyclodiphosphate and CMP. Is essential for chloroplast development. In Oryza sativa subsp. japonica (Rice), this protein is 2-C-methyl-D-erythritol 2,4-cyclodiphosphate synthase, chloroplastic.